Reading from the N-terminus, the 155-residue chain is 2-C-methyl-D-erythritol 2,4-cyclodiphosphate synthase (155 aa).

Residues D8 and H10 each coordinate a divalent metal cation. 4-CDP-2-C-methyl-D-erythritol 2-phosphate contacts are provided by residues 8–10 and 34–35; these read DVH and HS. H42 is an a divalent metal cation binding site. Residues 56–58, 61–65, 132–135, F139, and R142 contribute to the 4-CDP-2-C-methyl-D-erythritol 2-phosphate site; these read DIG, FPDSD, and TTEE.

The protein belongs to the IspF family. As to quaternary structure, homotrimer. A divalent metal cation serves as cofactor.

It catalyses the reaction 4-CDP-2-C-methyl-D-erythritol 2-phosphate = 2-C-methyl-D-erythritol 2,4-cyclic diphosphate + CMP. It participates in isoprenoid biosynthesis; isopentenyl diphosphate biosynthesis via DXP pathway; isopentenyl diphosphate from 1-deoxy-D-xylulose 5-phosphate: step 4/6. Its function is as follows. Involved in the biosynthesis of isopentenyl diphosphate (IPP) and dimethylallyl diphosphate (DMAPP), two major building blocks of isoprenoid compounds. Catalyzes the conversion of 4-diphosphocytidyl-2-C-methyl-D-erythritol 2-phosphate (CDP-ME2P) to 2-C-methyl-D-erythritol 2,4-cyclodiphosphate (ME-CPP) with a corresponding release of cytidine 5-monophosphate (CMP). The protein is 2-C-methyl-D-erythritol 2,4-cyclodiphosphate synthase of Clostridium acetobutylicum (strain ATCC 824 / DSM 792 / JCM 1419 / IAM 19013 / LMG 5710 / NBRC 13948 / NRRL B-527 / VKM B-1787 / 2291 / W).